Consider the following 255-residue polypeptide: Small ribosomal subunit protein uS2 (255 aa).

This sequence belongs to the universal ribosomal protein uS2 family.

The chain is Small ribosomal subunit protein uS2 from Geotalea daltonii (strain DSM 22248 / JCM 15807 / FRC-32) (Geobacter daltonii).